Reading from the N-terminus, the 220-residue chain is Transcriptional regulatory protein SpaR (220 aa).

In terms of domain architecture, Response regulatory spans Lys3–Leu115. Asp51 carries the post-translational modification 4-aspartylphosphate. Positions Gln124 to Glu220 form a DNA-binding region, ompR/PhoB-type.

Phosphorylated by SpaK.

Its subcellular location is the cytoplasm. In terms of biological role, member of the two-component regulatory system SpaK/SpaR involved in the regulation of the biosynthesis of lantibiotic subtilin. SpaR may function as a regulatory protein. The sequence is that of Transcriptional regulatory protein SpaR (spaR) from Bacillus subtilis.